We begin with the raw amino-acid sequence, 931 residues long: Protein phosphatase 1 regulatory subunit 37 homolog (931 aa).

A disordered region spans residues 20-71 (TAASSPASPIPPTSPSMFATPPHQQSHSSATSVRKKVCQEANSSADDPDSDA). A compositionally biased stretch (polar residues) spans 41 to 51 (PHQQSHSSATS). LRR repeat units lie at residues 232-259 (AISLQMLNLRYTNLNDRSIPSLCKLARA), 262-285 (SASLTCIHLENTQMSGKNLLVLIC), 290-314 (NTGIRELYLGDNGLQPTDGSHIYQL), 323-346 (LLDLRNNNIGDSGVRHICEGLRNR), 351-374 (KSALSAMVLWNNNVTGASMDSLAE), 379-407 (NTKIETLNIGSNNLGVEGVARLKPALVSN), 409-430 (HLHRLGLQNTGINCEGAIILAE), and 435-458 (NTALLRVDIRDNPIALAGLLALHS). Positions 519-533 (QDHVSEDTEKENKDA) are enriched in basic and acidic residues. Disordered stretches follow at residues 519 to 602 (QDHV…RHQR) and 780 to 807 (PDCTNTCEEPTTSREAERKRAEETIRQR). Residues 534-547 (DNDDKEPENEDGDT) are compositionally biased toward acidic residues. A compositionally biased stretch (low complexity) spans 554–563 (SDASADQSDS). Composition is skewed to basic and acidic residues over residues 564–584 (PADKEKSEKSKKENNNNEKRP) and 790–807 (TTSREAERKRAEETIRQR).

Belongs to the PPP1R37 family.

This is Protein phosphatase 1 regulatory subunit 37 homolog from Caenorhabditis briggsae.